We begin with the raw amino-acid sequence, 331 residues long: Pantothenate kinase (331 aa).

109-116 provides a ligand contact to ATP; it reads GSVAVGKS.

It belongs to the prokaryotic pantothenate kinase family.

The protein resides in the cytoplasm. It catalyses the reaction (R)-pantothenate + ATP = (R)-4'-phosphopantothenate + ADP + H(+). It participates in cofactor biosynthesis; coenzyme A biosynthesis; CoA from (R)-pantothenate: step 1/5. The polypeptide is Pantothenate kinase (Rhizobium johnstonii (strain DSM 114642 / LMG 32736 / 3841) (Rhizobium leguminosarum bv. viciae)).